A 197-amino-acid chain; its full sequence is FMN-dependent NADH:quinone oxidoreductase (197 aa).

Residues Ser-10, 16 to 18 (SQS), 93 to 96 (MYNF), and 137 to 140 (TRGG) contribute to the FMN site.

The protein belongs to the azoreductase type 1 family. In terms of assembly, homodimer. FMN is required as a cofactor.

It catalyses the reaction 2 a quinone + NADH + H(+) = 2 a 1,4-benzosemiquinone + NAD(+). It carries out the reaction N,N-dimethyl-1,4-phenylenediamine + anthranilate + 2 NAD(+) = 2-(4-dimethylaminophenyl)diazenylbenzoate + 2 NADH + 2 H(+). In terms of biological role, quinone reductase that provides resistance to thiol-specific stress caused by electrophilic quinones. Its function is as follows. Also exhibits azoreductase activity. Catalyzes the reductive cleavage of the azo bond in aromatic azo compounds to the corresponding amines. This is FMN-dependent NADH:quinone oxidoreductase from Shewanella frigidimarina (strain NCIMB 400).